We begin with the raw amino-acid sequence, 179 residues long: tRNA (cytidine(56)-2'-O)-methyltransferase (179 aa).

Residues Leu82, 112–116 (GAEKV), and 130–137 (VGNQPHSE) each bind S-adenosyl-L-methionine.

Belongs to the aTrm56 family. In terms of assembly, homodimer.

It localises to the cytoplasm. It catalyses the reaction cytidine(56) in tRNA + S-adenosyl-L-methionine = 2'-O-methylcytidine(56) in tRNA + S-adenosyl-L-homocysteine + H(+). In terms of biological role, specifically catalyzes the AdoMet-dependent 2'-O-ribose methylation of cytidine at position 56 in tRNAs. The sequence is that of tRNA (cytidine(56)-2'-O)-methyltransferase from Methanococcus maripaludis (strain C5 / ATCC BAA-1333).